Consider the following 46-residue polypeptide: Large ribosomal subunit protein bL34 (46 aa).

Basic residues predominate over residues 1–17 (MTKRTLRGSVRKKKRTS). Residues 1–26 (MTKRTLRGSVRKKKRTSGFRARMETP) are disordered.

Belongs to the bacterial ribosomal protein bL34 family.

The sequence is that of Large ribosomal subunit protein bL34 (rpmH) from Pseudanabaena sp. (strain PCC 6903).